The chain runs to 169 residues: MRPRKYIVVVLLSIAYTMCLAVGYPSDGTDDSTKSLKSGNRIRSHTPDIGTEERTLTWLKSMLRPSSSSAKVTKEIPEVVKSASDFKVRQTLSAITRKLGLHSQRLKRFASWLRKTGERLTRKKVYYAGYIAIVDSSSSQLKRLSVTYGSAFLFVIGFIVLLAFAMTAV.

The N-terminal stretch at 1–21 is a signal peptide; that stretch reads MRPRKYIVVVLLSIAYTMCLA. A dEER motif is present at residues 51–54; it reads TEER. Residues 149 to 169 form a helical membrane-spanning segment; the sequence is GSAFLFVIGFIVLLAFAMTAV.

The protein belongs to the RxLR effector family. In terms of assembly, interacts with host transcription factor NAC069.

The protein localises to the secreted. Its subcellular location is the host membrane. Its function is as follows. Secreted effector that inhibits stress-induced relocalization of the endoplasmic reticulum tail-anchored transcription factors to the nucleus, thus affecting stress responses. This chain is Secreted RxLR effector protein BLN03, found in Bremia lactucae (Lettuce downy mildew).